A 220-amino-acid polypeptide reads, in one-letter code: Large ribosomal subunit protein uL3 (220 aa).

Positions 113 to 143 (GTTKGHGYQGNIHKDGQRRGPMAHGSRYHRR) are disordered.

Belongs to the universal ribosomal protein uL3 family. As to quaternary structure, part of the 50S ribosomal subunit. Forms a cluster with proteins L14 and L19.

Functionally, one of the primary rRNA binding proteins, it binds directly near the 3'-end of the 23S rRNA, where it nucleates assembly of the 50S subunit. This chain is Large ribosomal subunit protein uL3, found in Limosilactobacillus fermentum (strain NBRC 3956 / LMG 18251) (Lactobacillus fermentum).